Here is a 328-residue protein sequence, read N- to C-terminus: Ferredoxin--NADP reductase (328 aa).

7 residues coordinate FAD: Glu-34, Gln-42, Tyr-47, Val-87, Phe-120, Asp-283, and Thr-323.

Belongs to the ferredoxin--NADP reductase type 2 family. Homodimer. It depends on FAD as a cofactor.

The catalysed reaction is 2 reduced [2Fe-2S]-[ferredoxin] + NADP(+) + H(+) = 2 oxidized [2Fe-2S]-[ferredoxin] + NADPH. The sequence is that of Ferredoxin--NADP reductase from Pediococcus pentosaceus (strain ATCC 25745 / CCUG 21536 / LMG 10740 / 183-1w).